The following is a 353-amino-acid chain: Mitochondrial distribution and morphology protein 12 (353 aa).

An SMP-LTD domain is found at 1-330 (MSFDIKWENL…WPSWICLDMN (330 aa)). 3 stretches are compositionally biased toward acidic residues: residues 64–75 (DEFYEDTTDSPE), 84–103 (TGDD…DDDG), and 330–342 (NDDD…EENP). 2 disordered regions span residues 64–140 (DEFY…NRSR) and 330–353 (NDDD…HVGS).

The protein belongs to the MDM12 family. Component of the ER-mitochondria encounter structure (ERMES) or MDM complex, composed of MMM1, MDM10, MDM12 and MDM34. An MMM1 homodimer associates with one molecule of MDM12 on each side in a pairwise head-to-tail manner, and the SMP-LTD domains of MMM1 and MDM12 generate a continuous hydrophobic tunnel for phospholipid trafficking.

The protein localises to the mitochondrion outer membrane. It localises to the endoplasmic reticulum membrane. Component of the ERMES/MDM complex, which serves as a molecular tether to connect the endoplasmic reticulum (ER) and mitochondria. Components of this complex are involved in the control of mitochondrial shape and protein biogenesis, and function in nonvesicular lipid trafficking between the ER and mitochondria. MDM12 is required for the interaction of the ER-resident membrane protein MMM1 and the outer mitochondrial membrane-resident beta-barrel protein MDM10. The MDM12-MMM1 subcomplex functions in the major beta-barrel assembly pathway that is responsible for biogenesis of all mitochondrial outer membrane beta-barrel proteins, and acts in a late step after the SAM complex. The MDM10-MDM12-MMM1 subcomplex further acts in the TOM40-specific pathway after the action of the MDM12-MMM1 complex. Essential for establishing and maintaining the structure of mitochondria and maintenance of mtDNA nucleoids. The protein is Mitochondrial distribution and morphology protein 12 of Candida tropicalis (strain ATCC MYA-3404 / T1) (Yeast).